The sequence spans 1012 residues: DNA polymerase catalytic subunit (1012 aa).

This sequence belongs to the DNA polymerase type-B family.

The protein localises to the host nucleus. It carries out the reaction DNA(n) + a 2'-deoxyribonucleoside 5'-triphosphate = DNA(n+1) + diphosphate. In Homo sapiens (Human), this protein is DNA polymerase catalytic subunit (U38).